Reading from the N-terminus, the 31-residue chain is Cyclotide mden-N (31 aa).

The cyclopeptide (Gly-Asn) cross-link spans 1–31; the sequence is GTIPCGESCVYIPCLTSALGCSCKNKVCYRN. Cystine bridges form between Cys-5–Cys-21, Cys-9–Cys-23, and Cys-14–Cys-28.

It belongs to the cyclotide family. Bracelet subfamily. This is a cyclic peptide.

Its function is as follows. Probably participates in a plant defense mechanism. The protein is Cyclotide mden-N of Melicytus dentatus (Tree violet).